The following is a 455-amino-acid chain: GTPase Der (455 aa).

EngA-type G domains follow at residues 3 to 167 and 184 to 359; these read FTIA…PEPA and IRVA…AVWN. Residues 9–16, 56–60, 119–122, 190–197, 237–241, and 302–305 contribute to the GTP site; these read GRPNVGKS, DTAGL, NKSE, GRPNAGKS, and NKWD. Residues 360–444 form the KH-like domain; that stretch reads RRVATALLNR…PIRITLREKA (85 aa).

Belongs to the TRAFAC class TrmE-Era-EngA-EngB-Septin-like GTPase superfamily. EngA (Der) GTPase family. In terms of assembly, associates with the 50S ribosomal subunit.

Its function is as follows. GTPase that plays an essential role in the late steps of ribosome biogenesis. This chain is GTPase Der, found in Nitrobacter winogradskyi (strain ATCC 25391 / DSM 10237 / CIP 104748 / NCIMB 11846 / Nb-255).